The sequence spans 265 residues: H-2 class II histocompatibility antigen, A-Q beta chain (265 aa).

Residues 1–27 (MALQIPSLLLSAAVVVLMVLSSPRTEG) form the signal peptide. Residues 28-122 (GNSERHFVAQ…VETHTSLRRL (95 aa)) are beta-1. The Extracellular segment spans residues 28-227 (GNSERHFVAQ…AQSESARSKM (200 aa)). Cystine bridges form between Cys-42-Cys-106 and Cys-145-Cys-201. Residue Asn-46 is glycosylated (N-linked (GlcNAc...) asparagine). Positions 123-217 (EQPNVAISLS…LKSPITVEWR (95 aa)) are beta-2. In terms of domain architecture, Ig-like C1-type spans 125 to 213 (PNVAISLSRT…EHPSLKSPIT (89 aa)). Residues 218–227 (AQSESARSKM) are connecting peptide. The helical transmembrane segment at 228 to 247 (LSGIGGCVLGVIFLGLGLFI) threads the bilayer. Residues 248–265 (RHRSQKGPRGPPPAGLLQ) are Cytoplasmic-facing.

This sequence belongs to the MHC class II family. Post-translationally, ubiquitinated in immature dendritic cells leading to down-regulation of MHC class II.

It localises to the membrane. This is H-2 class II histocompatibility antigen, A-Q beta chain (H2-Ab1) from Mus musculus (Mouse).